We begin with the raw amino-acid sequence, 413 residues long: Aspartate aminotransferase, cytoplasmic (413 aa).

L-aspartate is bound by residues glycine 39 and tryptophan 141. Serine 149 is subject to Phosphoserine. Asparagine 195 lines the L-aspartate pocket. Lysine 259 carries the N6-(pyridoxal phosphate)lysine modification. L-aspartate is bound at residue arginine 387.

Belongs to the class-I pyridoxal-phosphate-dependent aminotransferase family. In terms of assembly, homodimer. Pyridoxal 5'-phosphate serves as cofactor.

It localises to the cytoplasm. It carries out the reaction L-aspartate + 2-oxoglutarate = oxaloacetate + L-glutamate. It catalyses the reaction L-cysteine + 2-oxoglutarate = 2-oxo-3-sulfanylpropanoate + L-glutamate. The catalysed reaction is (2S)-2-aminobutanoate + 2-oxoglutarate = 2-oxobutanoate + L-glutamate. The enzyme catalyses 3-sulfino-L-alanine + 2-oxoglutarate = 3-sulfinopyruvate + L-glutamate. Biosynthesis of L-glutamate from L-aspartate or L-cysteine. Important regulator of levels of glutamate, the major excitatory neurotransmitter of the vertebrate central nervous system. Acts as a scavenger of glutamate in brain neuroprotection. The aspartate aminotransferase activity is involved in hepatic glucose synthesis during development and in adipocyte glyceroneogenesis. Using L-cysteine as substrate, regulates levels of mercaptopyruvate, an important source of hydrogen sulfide. Mercaptopyruvate is converted into H(2)S via the action of 3-mercaptopyruvate sulfurtransferase (3MST). Hydrogen sulfide is an important synaptic modulator and neuroprotectant in the brain. The sequence is that of Aspartate aminotransferase, cytoplasmic from Pongo abelii (Sumatran orangutan).